Reading from the N-terminus, the 131-residue chain is Glycine cleavage system H protein (131 aa).

The 83-residue stretch at 24–106 folds into the Lipoyl-binding domain; the sequence is RVTVGISDHA…YGEGWIFVVE (83 aa). Lysine 65 is modified (N6-lipoyllysine).

It belongs to the GcvH family. In terms of assembly, the glycine cleavage system is composed of four proteins: P, T, L and H. The cofactor is (R)-lipoate.

In terms of biological role, the glycine cleavage system catalyzes the degradation of glycine. The H protein shuttles the methylamine group of glycine from the P protein to the T protein. The polypeptide is Glycine cleavage system H protein (Xanthomonas campestris pv. campestris (strain 8004)).